We begin with the raw amino-acid sequence, 167 residues long: Mediator of RNA polymerase II transcription subunit 10 (167 aa).

Residues 53–88 (LSTHTKPQPPSQDEEQKEKQDDTPEGSANDPLLRDI) are disordered.

It belongs to the Mediator complex subunit 10 family. Component of the Mediator complex.

It is found in the nucleus. Functionally, component of the Mediator complex, a coactivator involved in the regulated transcription of nearly all RNA polymerase II-dependent genes. Mediator functions as a bridge to convey information from gene-specific regulatory proteins to the basal RNA polymerase II transcription machinery. Mediator is recruited to promoters by direct interactions with regulatory proteins and serves as a scaffold for the assembly of a functional preinitiation complex with RNA polymerase II and the general transcription factors. In Neosartorya fischeri (strain ATCC 1020 / DSM 3700 / CBS 544.65 / FGSC A1164 / JCM 1740 / NRRL 181 / WB 181) (Aspergillus fischerianus), this protein is Mediator of RNA polymerase II transcription subunit 10 (nut2).